The following is a 342-amino-acid chain: MRVLGLETSCDETGVAVYDSAQGLLAHRLYSQVKLHAEYGGVVPELASRDHVRKLLPLIDEVMAASGSTAADIDAIAYTAGPGLIGALMVGAAFGRSLAYAWGIPAVGVHHMEGHLLAPMLEAVPPEFPFVALLVSGGHTQLVKVMAIGDYELLGESIDDAAGEAFDKAAKMLDLDYPGGPQIARLAEQGVHGRFKFPRPMVDRPGLAFSFSGLKTATLTAVNAHKQANGLPDDQTCADIACAFQEAVVDTLVIKCRRALEQTGMKTLVIAGGVSANKKLRADLEVELARIGARVFYARHEFCTDNGAMIAYAGCQRLLAGQQEGLAIHVKARWPLNSLSSL.

2 residues coordinate Fe cation: His111 and His115. Residues 134-138 (LVSGG), Asp167, Gly180, and Asn277 contribute to the substrate site. Position 305 (Asp305) interacts with Fe cation.

It belongs to the KAE1 / TsaD family. Fe(2+) is required as a cofactor.

The protein resides in the cytoplasm. The catalysed reaction is L-threonylcarbamoyladenylate + adenosine(37) in tRNA = N(6)-L-threonylcarbamoyladenosine(37) in tRNA + AMP + H(+). Its function is as follows. Required for the formation of a threonylcarbamoyl group on adenosine at position 37 (t(6)A37) in tRNAs that read codons beginning with adenine. Is involved in the transfer of the threonylcarbamoyl moiety of threonylcarbamoyl-AMP (TC-AMP) to the N6 group of A37, together with TsaE and TsaB. TsaD likely plays a direct catalytic role in this reaction. The chain is tRNA N6-adenosine threonylcarbamoyltransferase from Cellvibrio japonicus (strain Ueda107) (Pseudomonas fluorescens subsp. cellulosa).